The primary structure comprises 273 residues: Diadenylate cyclase (273 aa).

The next 3 membrane-spanning stretches (helical) occupy residues 12 to 32, 37 to 57, and 61 to 81; these read LANIVDILVVWFVIYKVIMLI, AVQLLKGIFIIIAVKLLSGFF, and TVEWITDQMLTWGFLAIIIIF. Residues 82-242 enclose the DAC domain; that stretch reads QPELRRALET…GGELFRDVSE (161 aa).

Belongs to the adenylate cyclase family. DacA/CdaA subfamily. As to quaternary structure, probably a homodimer.

Its subcellular location is the cell membrane. The catalysed reaction is 2 ATP = 3',3'-c-di-AMP + 2 diphosphate. Its function is as follows. Catalyzes the condensation of 2 ATP molecules into cyclic di-AMP (c-di-AMP), a signaling compound secreted into the host's cytosol where it triggers the cytosolic surveillance pathway (CSP), a host pathway of innate immunity characterized by expression of beta interferon (IFN-beta) and coregulated genes. Overexpression increases export of c-di-AMP. c-di-AMP is a second messenger that mediates growth, cell wall stability and virulence. The chain is Diadenylate cyclase from Listeria monocytogenes serotype 1/2a (strain 10403S).